We begin with the raw amino-acid sequence, 123 residues long: Ribonuclease P protein component (123 aa).

Belongs to the RnpA family. In terms of assembly, consists of a catalytic RNA component (M1 or rnpB) and a protein subunit.

The catalysed reaction is Endonucleolytic cleavage of RNA, removing 5'-extranucleotides from tRNA precursor.. RNaseP catalyzes the removal of the 5'-leader sequence from pre-tRNA to produce the mature 5'-terminus. It can also cleave other RNA substrates such as 4.5S RNA. The protein component plays an auxiliary but essential role in vivo by binding to the 5'-leader sequence and broadening the substrate specificity of the ribozyme. This chain is Ribonuclease P protein component, found in Streptomyces bikiniensis.